Reading from the N-terminus, the 89-residue chain is Large ribosomal subunit protein bL27 (89 aa).

The disordered stretch occupies residues 1–21 (MAHKKAGGSSRNGRDSESKRL).

The protein belongs to the bacterial ribosomal protein bL27 family.

This Chelativorans sp. (strain BNC1) protein is Large ribosomal subunit protein bL27.